The following is a 272-amino-acid chain: uncharacterized protein (272 aa).

NAD(+) is bound by residues 12–34 (FITGAARGLGRAHAVRLAADGAN), 39–40 (DI), 77–78 (DV), and Asn-104. Ser-153 provides a ligand contact to substrate. The Proton acceptor role is filled by Tyr-170. NAD(+) is bound by residues Lys-174 and 203–205 (VDT).

It belongs to the short-chain dehydrogenases/reductases (SDR) family.

This is an uncharacterized protein from Mycobacterium tuberculosis (strain CDC 1551 / Oshkosh).